We begin with the raw amino-acid sequence, 348 residues long: Isopentenyl-diphosphate delta-isomerase (348 aa).

Residue 14–15 (RK) participates in substrate binding. FMN contacts are provided by residues S72, 73-75 (SMT), S103, and N131. 103–105 (SQR) provides a ligand contact to substrate. Q166 contacts substrate. E167 lines the Mg(2+) pocket. FMN contacts are provided by residues K198, T228, 278 to 280 (GIR), and 299 to 300 (AR).

It belongs to the IPP isomerase type 2 family. Homooctamer. Dimer of tetramers. FMN is required as a cofactor. It depends on NADPH as a cofactor. Requires Mg(2+) as cofactor.

The protein resides in the cytoplasm. It carries out the reaction isopentenyl diphosphate = dimethylallyl diphosphate. Functionally, involved in the biosynthesis of isoprenoids. Catalyzes the 1,3-allylic rearrangement of the homoallylic substrate isopentenyl (IPP) to its allylic isomer, dimethylallyl diphosphate (DMAPP). The sequence is that of Isopentenyl-diphosphate delta-isomerase from Synechococcus sp. (strain ATCC 27144 / PCC 6301 / SAUG 1402/1) (Anacystis nidulans).